The primary structure comprises 132 residues: Phosphomevalonate dehydratase small subunit (132 aa).

The active-site Proton acceptor is Ser62.

Belongs to the AcnX type II small subunit family. Heterodimer composed of a large subunit (PMDh-L) and a small subunit (PMDh-S).

The enzyme catalyses (R)-5-phosphomevalonate = (2E)-3-methyl-5-phosphooxypent-2-enoate + H2O. Its pathway is isoprenoid biosynthesis; isopentenyl diphosphate biosynthesis via mevalonate pathway. Its function is as follows. Component of a hydro-lyase that catalyzes the dehydration of mevalonate 5-phosphate (MVA5P) to form trans-anhydromevalonate 5-phosphate (tAHMP). Involved in the archaeal mevalonate (MVA) pathway, which provides fundamental precursors for isoprenoid biosynthesis, such as isopentenyl diphosphate (IPP) and dimethylallyl diphosphate (DMAPP). This Methanocella arvoryzae (strain DSM 22066 / NBRC 105507 / MRE50) protein is Phosphomevalonate dehydratase small subunit.